The sequence spans 368 residues: Quinolinate synthase (368 aa).

2 residues coordinate iminosuccinate: histidine 46 and serine 63. Cysteine 110 provides a ligand contact to [4Fe-4S] cluster. Iminosuccinate is bound by residues 141 to 143 (YVN) and serine 162. A [4Fe-4S] cluster-binding site is contributed by cysteine 230. Residues 256 to 258 (HPE) and threonine 273 contribute to the iminosuccinate site. Cysteine 320 is a [4Fe-4S] cluster binding site.

This sequence belongs to the quinolinate synthase family. Type 3 subfamily. Requires [4Fe-4S] cluster as cofactor.

The protein localises to the cytoplasm. The catalysed reaction is iminosuccinate + dihydroxyacetone phosphate = quinolinate + phosphate + 2 H2O + H(+). It functions in the pathway cofactor biosynthesis; NAD(+) biosynthesis; quinolinate from iminoaspartate: step 1/1. Catalyzes the condensation of iminoaspartate with dihydroxyacetone phosphate to form quinolinate. This chain is Quinolinate synthase, found in Bacillus cereus (strain G9842).